A 398-amino-acid chain; its full sequence is MSSLPAVYIVSSARTPVGSFLGSLSSLTAPQLGAHAIKAALAKVDGLKPSDVQEVFFGNVISANVGQNPARQCALGAGLEESTICTTVNKVCASGLKAIILGAQTIMTGNADVVVAGGTESMSNAPHYLPNLRTGAKYGHQSLVDGIMKDGLTDAGKQELMGLQAEECAQDHGFSREQQDEYAIRTYEKAQAAQKAGLFDEEIAPIQLPGFRGKPDVTVTQDEEPKNLNPEKLRAIKPAFIPGSGTVTAPNSSPLNDGAAAVVLVSEAKLKELNLKPVAKILGWGDAAQQPSKFTTAPALAIPKALKHAGVGQDAIDAFEINEAFSVVALANMKLLGIPEEKVNLHGGAVAIGHPIGASGARILTTLLGVLKAKKGKLGCAGICNGGGGASALVVELL.

Cys-92 acts as the Acyl-thioester intermediate in catalysis. Tyr-187 is a K(+) binding site. Residues Asn-229 and Lys-232 each contribute to the CoA site. The K(+) site is built by Ala-249, Pro-250, and Ser-252. Ser-253 serves as a coordination point for CoA. Position 350 (Val-350) interacts with K(+). Residues His-354 and Cys-384 each act as proton acceptor in the active site. Asn-385 is a chloride binding site.

This sequence belongs to the thiolase-like superfamily. Thiolase family. In terms of assembly, homotetramer. K(+) is required as a cofactor.

The protein resides in the cytoplasm. It is found in the cytosol. The enzyme catalyses 2 acetyl-CoA = acetoacetyl-CoA + CoA. It participates in metabolic intermediate biosynthesis; (R)-mevalonate biosynthesis; (R)-mevalonate from acetyl-CoA: step 1/3. With respect to regulation, activity is increased by monovalent cations such as K(+), Rb(+) or Cs(+). Functionally, acetyl-CoA acetyltransferase; part of the first module of ergosterol biosynthesis pathway that includes the early steps of the pathway, conserved across all eukaryotes, and which results in the formation of mevalonate from acetyl-coenzyme A (acetyl-CoA). In this module, the cytosolic acetyl-CoA acetyltransferase erg10B catalyzes the formation of acetoacetyl-CoA. The hydroxymethylglutaryl-CoA synthases AFUA_8G07210 and AFUA_3G10660 then condense acetyl-CoA with acetoacetyl-CoA to form HMG-CoA. The rate-limiting step of the early module is the reduction to mevalonate by the 3-hydroxy-3-methylglutaryl-coenzyme A (HMG-CoA) reductases hmg1 and hmg2. Mevalonate is also a precursor for the extracellular siderophore triacetylfusarinine C (TAFC). This Aspergillus fumigatus (strain CBS 144.89 / FGSC A1163 / CEA10) (Neosartorya fumigata) protein is Acetyl-CoA acetyltransferase erg10B, cytosolic.